The primary structure comprises 248 residues: Enolase-phosphatase E1 (248 aa).

Mg(2+) is bound by residues Asp14 and Glu16. Substrate-binding positions include 145-146 (SS) and Lys179. Asp204 provides a ligand contact to Mg(2+).

The protein belongs to the HAD-like hydrolase superfamily. MasA/MtnC family. As to quaternary structure, monomer. Mg(2+) serves as cofactor.

The protein localises to the cytoplasm. The protein resides in the nucleus. It carries out the reaction 5-methylsulfanyl-2,3-dioxopentyl phosphate + H2O = 1,2-dihydroxy-5-(methylsulfanyl)pent-1-en-3-one + phosphate. Its pathway is amino-acid biosynthesis; L-methionine biosynthesis via salvage pathway; L-methionine from S-methyl-5-thio-alpha-D-ribose 1-phosphate: step 3/6. It functions in the pathway amino-acid biosynthesis; L-methionine biosynthesis via salvage pathway; L-methionine from S-methyl-5-thio-alpha-D-ribose 1-phosphate: step 4/6. Its function is as follows. Bifunctional enzyme that catalyzes the enolization of 2,3-diketo-5-methylthiopentyl-1-phosphate (DK-MTP-1-P) into the intermediate 2-hydroxy-3-keto-5-methylthiopentenyl-1-phosphate (HK-MTPenyl-1-P), which is then dephosphorylated to form the acireductone 1,2-dihydroxy-3-keto-5-methylthiopentene (DHK-MTPene). The protein is Enolase-phosphatase E1 of Caenorhabditis elegans.